The following is a 581-amino-acid chain: Proline--tRNA ligase 1 (581 aa).

This sequence belongs to the class-II aminoacyl-tRNA synthetase family. ProS type 1 subfamily. Homodimer.

Its subcellular location is the cytoplasm. The catalysed reaction is tRNA(Pro) + L-proline + ATP = L-prolyl-tRNA(Pro) + AMP + diphosphate. Functionally, catalyzes the attachment of proline to tRNA(Pro) in a two-step reaction: proline is first activated by ATP to form Pro-AMP and then transferred to the acceptor end of tRNA(Pro). As ProRS can inadvertently accommodate and process non-cognate amino acids such as alanine and cysteine, to avoid such errors it has two additional distinct editing activities against alanine. One activity is designated as 'pretransfer' editing and involves the tRNA(Pro)-independent hydrolysis of activated Ala-AMP. The other activity is designated 'posttransfer' editing and involves deacylation of mischarged Ala-tRNA(Pro). The misacylated Cys-tRNA(Pro) is not edited by ProRS. In Rhodococcus jostii (strain RHA1), this protein is Proline--tRNA ligase 1.